We begin with the raw amino-acid sequence, 376 residues long: Rhodopsin (376 aa).

Over 1–51 (MSLINEPSYSAYSWGGQGGYGNQTVVDKVLPEMLHLIDPHWYQFPPMNPLW) the chain is Extracellular. A glycan (N-linked (GlcNAc...) asparagine) is linked at Asn-22. A helical transmembrane segment spans residues 52–76 (HGLLGFVIGCLGFVSVVGNGMVIYI). Over 77–88 (FSTTKGLRTPSN) the chain is Cytoplasmic. A helical transmembrane segment spans residues 89-113 (LLVVNLAFSDFLMMLSMSPPMVINC). The Extracellular portion of the chain corresponds to 114–128 (YYETWVLGPFMCELY). The cysteines at positions 125 and 202 are disulfide-linked. Residues 129–148 (ALLGSLFGCGSIWTMVMIAL) traverse the membrane as a helical segment. Residues 149-167 (DRYNVIVKGLAAKPMTNKT) lie on the Cytoplasmic side of the membrane. A helical transmembrane segment spans residues 168 to 191 (AMLRILGIWAMSIAWTVFPLFGWN). The Extracellular segment spans residues 192 to 215 (RYVPEGNMTACGTDYLNKEWVSRS). A glycan (N-linked (GlcNAc...) asparagine) is linked at Asn-198. Residues 216 to 243 (YILVYSVFVYFLPLATIIYSYWFIVQAV) traverse the membrane as a helical segment. The Cytoplasmic segment spans residues 244–278 (SAHEKQMREQAKKMNVASLRSAENANTSAECKLAK). A helical transmembrane segment spans residues 279-302 (VALMTISLWFFAWTPYLVTDFSGI). The Extracellular portion of the chain corresponds to 303–309 (FEWGKIS). The helical transmembrane segment at 310–334 (PLATIWCSLFAKANAVYNPIVYGIS) threads the bilayer. An N6-(retinylidene)lysine modification is found at Lys-321. At 335–376 (HPKYRAALNKKFPSLACASEPDDTASQASGATTVSDEKSASA) the chain is on the cytoplasmic side. Residues 353–376 (SEPDDTASQASGATTVSDEKSASA) are disordered. Residues 358-368 (TASQASGATTV) are compositionally biased toward polar residues.

The protein belongs to the G-protein coupled receptor 1 family. Opsin subfamily. Post-translationally, phosphorylated on some or all of the serine and threonine residues present in the C-terminal region.

It is found in the membrane. In terms of biological role, visual pigments are the light-absorbing molecules that mediate vision. They consist of an apoprotein, opsin, covalently linked to cis-retinal. The chain is Rhodopsin from Sphodromantis sp. (Mantis).